The chain runs to 917 residues: Protein translocase subunit SecA (917 aa).

Residues Gln-87, 105 to 109 (GEGKT), and Asp-516 each bind ATP. Residues Cys-901, Cys-903, Cys-912, and His-913 each contribute to the Zn(2+) site.

It belongs to the SecA family. Monomer and homodimer. Part of the essential Sec protein translocation apparatus which comprises SecA, SecYEG and auxiliary proteins SecDF-YajC and YidC. Zn(2+) serves as cofactor.

It is found in the cell inner membrane. The protein resides in the cytoplasm. The catalysed reaction is ATP + H2O + cellular proteinSide 1 = ADP + phosphate + cellular proteinSide 2.. Part of the Sec protein translocase complex. Interacts with the SecYEG preprotein conducting channel. Has a central role in coupling the hydrolysis of ATP to the transfer of proteins into and across the cell membrane, serving both as a receptor for the preprotein-SecB complex and as an ATP-driven molecular motor driving the stepwise translocation of polypeptide chains across the membrane. This chain is Protein translocase subunit SecA, found in Acidovorax ebreus (strain TPSY) (Diaphorobacter sp. (strain TPSY)).